The sequence spans 484 residues: Pentatricopeptide repeat-containing protein At1g09190 (484 aa).

10 PPR repeats span residues Asn-66–Ala-100, Asp-101–Arg-135, Leu-136–Arg-166, Asn-167–Arg-197, Ser-198–Pro-232, Asp-233–Lys-267, Phe-269–Arg-299, Asn-300–Ala-334, Asn-336–Arg-366, and Arg-372–Ala-406. Residues Met-407–Val-482 form a type E motif region.

Belongs to the PPR family. PCMP-E subfamily.

This Arabidopsis thaliana (Mouse-ear cress) protein is Pentatricopeptide repeat-containing protein At1g09190 (PCMP-E70).